Reading from the N-terminus, the 528-residue chain is Protein arginine N-methyltransferase 3 (528 aa).

The tract at residues 1–43 (MCSLAAGNGRGAELGPEPLELSDSGDDAGWEDEDADTEPAHGR) is disordered. The residue at position 2 (cysteine 2) is an N-acetylcysteine. A phosphoserine mark is found at serine 22 and serine 24. The span at 23 to 37 (DSGDDAGWEDEDADT) shows a compositional bias: acidic residues. Residues 46-69 (TPCLFCDRLFASAEETFSHCKLEH) form a C2H2-type zinc finger. Position 169 is a phosphoserine (serine 169). The segment at 184-528 (MKQFAQDFVM…NSSTQTYSLQ (345 aa)) is mediates interaction with ALDH1A1. The SAM-dependent MTase PRMT-type domain occupies 214 to 528 (DGVYFSSYGH…NSSTQTYSLQ (315 aa)). S-adenosyl-L-homocysteine-binding residues include arginine 236, glycine 260, aspartate 282, serine 284, isoleucine 310, and glutamate 311. Residues glutamate 326 and glutamate 335 contribute to the active site.

It belongs to the class I-like SAM-binding methyltransferase superfamily. Protein arginine N-methyltransferase family. In terms of assembly, monomer and homodimer. Interacts with EPB41L3 (via FERM domain); the interaction is direct and inhibits the protein-arginine N-methyltransferase activity of PRMT3. Interacts with the 40S ribosomal protein RPS2. Interacts with ALDH1A1; the interaction is direct, inhibits ALDH1A1 aldehyde dehydrogenase activity and is independent of the methyltransferase activity of PRMT3.

The protein localises to the cytoplasm. It is found in the cytosol. It localises to the nucleus. The enzyme catalyses L-arginyl-[protein] + S-adenosyl-L-methionine = N(omega)-methyl-L-arginyl-[protein] + S-adenosyl-L-homocysteine + H(+). The catalysed reaction is L-arginyl-[protein] + 2 S-adenosyl-L-methionine = N(omega),N(omega)-dimethyl-L-arginyl-[protein] + 2 S-adenosyl-L-homocysteine + 2 H(+). With respect to regulation, inhibited by N-ethylmaleimide and high concentrations of zinc chloride. Its function is as follows. Protein-arginine N-methyltransferase that catalyzes both the monomethylation and asymmetric dimethylation of the guanidino nitrogens of arginine residues in target proteins, and therefore falls into the group of type I methyltransferases. Catalyzes the asymmetric arginine dimethylation at multiple sites in the Arg/Gly-rich region of small ribosomal subunit protein uS5/RPS2. Also appears to methylate other ribosomal proteins. May regulate retinoic acid synthesis and signaling by inhibiting ALDH1A1 retinal dehydrogenase activity. Contributes to methylation of histone H4 'Arg-3', a specific tag for epigenetic transcriptional activation. Promotes osteogenesis. In Mus musculus (Mouse), this protein is Protein arginine N-methyltransferase 3.